Consider the following 39-residue polypeptide: Cytochrome b6-f complex subunit 5 (39 aa).

The chain crosses the membrane as a helical span at residues 5–25 (LLCGIVLGLVPITLLGLFVSA).

The protein belongs to the PetG family. In terms of assembly, the 4 large subunits of the cytochrome b6-f complex are cytochrome b6, subunit IV (17 kDa polypeptide, PetD), cytochrome f and the Rieske protein, while the 4 small subunits are PetG, PetL, PetM and PetN. The complex functions as a dimer.

It localises to the cellular thylakoid membrane. Its function is as follows. Component of the cytochrome b6-f complex, which mediates electron transfer between photosystem II (PSII) and photosystem I (PSI), cyclic electron flow around PSI, and state transitions. PetG is required for either the stability or assembly of the cytochrome b6-f complex. In Prochlorococcus marinus (strain MIT 9515), this protein is Cytochrome b6-f complex subunit 5.